The chain runs to 755 residues: ABC transporter G family member 2 (755 aa).

Positions 98 to 358 (LSFTDLTYSV…FSEFKHPIPE (261 aa)) constitute an ABC transporter domain. Residue 151-158 (GASGSGKS) coordinates ATP. The 211-residue stretch at 449–659 (IEMIVIGKRA…PYEGVLQNEF (211 aa)) folds into the ABC transmembrane type-2 domain. 6 consecutive transmembrane segments (helical) span residues 468 to 488 (LLGM…TMFT), 503 to 523 (FFAF…PVFL), 552 to 572 (IPAL…AVGL), 579 to 599 (FFFF…FVTF), 609 to 629 (LGFT…GFFI), and 728 to 748 (LWIT…TLLI).

Belongs to the ABC transporter superfamily. ABCG family. Eye pigment precursor importer (TC 3.A.1.204) subfamily.

Its subcellular location is the membrane. This is ABC transporter G family member 2 (ABCG2) from Arabidopsis thaliana (Mouse-ear cress).